The sequence spans 446 residues: Eukaryotic translation initiation factor 3 subunit E (446 aa).

The PCI domain occupies 240–420 (PLFNDENSRE…GTVVMNHPNS (181 aa)).

It belongs to the eIF-3 subunit E family. Component of the eukaryotic translation initiation factor 3 (eIF-3) complex.

The protein resides in the cytoplasm. Its function is as follows. Component of the eukaryotic translation initiation factor 3 (eIF-3) complex, which is involved in protein synthesis of a specialized repertoire of mRNAs and, together with other initiation factors, stimulates binding of mRNA and methionyl-tRNAi to the 40S ribosome. The eIF-3 complex specifically targets and initiates translation of a subset of mRNAs involved in cell proliferation. The chain is Eukaryotic translation initiation factor 3 subunit E from Pyricularia oryzae (strain 70-15 / ATCC MYA-4617 / FGSC 8958) (Rice blast fungus).